A 44-amino-acid polypeptide reads, in one-letter code: Antifungal protein R (44 aa).

The protein belongs to the thaumatin family.

In terms of biological role, has antifungal activity. Inhibits the growth of Trichoderma viridae and Candida albicans. In Hordeum vulgare (Barley), this protein is Antifungal protein R.